Here is a 128-residue protein sequence, read N- to C-terminus: Sulfurtransferase TusD (128 aa).

The active-site Cysteine persulfide intermediate is the Cys78.

Belongs to the DsrE/TusD family. Heterohexamer, formed by a dimer of trimers. The hexameric TusBCD complex contains 2 copies each of TusB, TusC and TusD. The TusBCD complex interacts with TusE.

It localises to the cytoplasm. Part of a sulfur-relay system required for 2-thiolation of 5-methylaminomethyl-2-thiouridine (mnm(5)s(2)U) at tRNA wobble positions. Accepts sulfur from TusA and transfers it in turn to TusE. This chain is Sulfurtransferase TusD, found in Buchnera aphidicola subsp. Acyrthosiphon pisum (strain 5A).